Consider the following 525-residue polypeptide: Peptide chain release factor 3 (525 aa).

In terms of domain architecture, tr-type G spans 9–276 (AKRRTFAIIS…GFTRYAPAPQ (268 aa)). Residues 18–25 (SHPDAGKT), 86–90 (DTPGH), and 140–143 (NKFD) contribute to the GTP site.

This sequence belongs to the TRAFAC class translation factor GTPase superfamily. Classic translation factor GTPase family. PrfC subfamily.

The protein resides in the cytoplasm. Its function is as follows. Increases the formation of ribosomal termination complexes and stimulates activities of RF-1 and RF-2. It binds guanine nucleotides and has strong preference for UGA stop codons. It may interact directly with the ribosome. The stimulation of RF-1 and RF-2 is significantly reduced by GTP and GDP, but not by GMP. The chain is Peptide chain release factor 3 from Francisella tularensis subsp. novicida (strain U112).